Consider the following 470-residue polypeptide: GTPase grn1 (470 aa).

Positions 1–16 (MVSLKKKSKRRTTRLR) are enriched in basic residues. Residues 1-56 (MVSLKKKSKRRTTRLRSRIEKKAAESKRKQKRADKKNPQWKSRIPKDPGIPNSFPY) are disordered. A compositionally biased stretch (basic and acidic residues) spans 17-27 (SRIEKKAAESK). The 181-residue stretch at 153 to 333 (DKEFKKVVEA…LVDSPGIVFP (181 aa)) folds into the CP-type G domain. Residues 202 to 205 (NKID), 276 to 283 (GYPNVGKS), and 326 to 329 (DSPG) contribute to the GTP site. Residues 405–415 (ARKRGRLGRGG) form an RNA-binding region.

It belongs to the TRAFAC class YlqF/YawG GTPase family.

The protein resides in the nucleus. The protein localises to the nucleolus. Functionally, required for optimal growth. Required for normal processing of ribosomal pre-rRNA. Required for nuclear export of ribosomal protein rpl2501. The chain is GTPase grn1 from Schizosaccharomyces pombe (strain 972 / ATCC 24843) (Fission yeast).